Reading from the N-terminus, the 169-residue chain is Nascent polypeptide-associated complex subunit alpha (169 aa).

The NAC-A/B domain maps to 14–78 (NKNEKKAREM…AKIDNFSQKL (65 aa)). The disordered stretch occupies residues 85-128 (IQSVSKSPEEIQKDMQLAADQAGDESAKPAAAAEEDDEAPVDAG). The UBA domain occupies 130–169 (LSAEDIELVASQANVSKNKAIKALKEHNGDIVNAIMALSK).

It belongs to the NAC-alpha family. Part of the nascent polypeptide-associated complex (NAC), consisting of EGD2 and EGD1. NAC associates with ribosomes via EGD1.

Its subcellular location is the cytoplasm. It is found in the nucleus. In terms of biological role, component of the nascent polypeptide-associated complex (NAC), a dynamic component of the ribosomal exit tunnel, protecting the emerging polypeptides from interaction with other cytoplasmic proteins to ensure appropriate nascent protein targeting. The NAC complex also promotes mitochondrial protein import by enhancing productive ribosome interactions with the outer mitochondrial membrane and blocks the inappropriate interaction of ribosomes translating non-secretory nascent polypeptides with translocation sites in the membrane of the endoplasmic reticulum. EGD2 may also be involved in transcription regulation. The polypeptide is Nascent polypeptide-associated complex subunit alpha (EGD2) (Vanderwaltozyma polyspora (strain ATCC 22028 / DSM 70294 / BCRC 21397 / CBS 2163 / NBRC 10782 / NRRL Y-8283 / UCD 57-17) (Kluyveromyces polysporus)).